The primary structure comprises 261 residues: MWFLVLCLDLSLGETGALPPIQSRIIGGWECEKHSKPWQVAVYHQGHFQCGGVLVHPQWVLTAAHCMSDDYQIWLGRHNLSEDEDTAQFHQVSDSFLDPQFDLSLLKKKYLRPYDDISHDLMLLRLAQPARITDAVKILDLPTQEPKLGSTCYTSGWGLISTFTNRGSGTLQCVELRLQSNEKCARAYPEKMTEFVLCATHRDDSGSICLGDSGGALICDGVFQGITSWGYSECADFNDNFVFTKVMPHLKWIKETIEKNS.

The signal sequence occupies residues 1-17 (MWFLVLCLDLSLGETGA). Positions 18 to 24 (LPPIQSR) are cleaved as a propeptide — activation peptide. The region spanning 25–258 (IIGGWECEKH…HLKWIKETIE (234 aa)) is the Peptidase S1 domain. 5 disulfide bridges follow: cysteine 31–cysteine 173, cysteine 50–cysteine 66, cysteine 152–cysteine 219, cysteine 184–cysteine 198, and cysteine 209–cysteine 234. The active-site Charge relay system is the histidine 65. Asparagine 79 carries an N-linked (GlcNAc...) asparagine glycan. Aspartate 120 (charge relay system) is an active-site residue. The Charge relay system role is filled by serine 213.

The protein belongs to the peptidase S1 family. Kallikrein subfamily. Detected in prostate and semen.

It localises to the secreted. It carries out the reaction Preferential cleavage of Arg-|-Xaa bonds in small molecule substrates. Highly selective action to release kallidin (lysyl-bradykinin) from kininogen involves hydrolysis of Met-|-Xaa or Leu-|-Xaa.. Its function is as follows. Glandular kallikreins cleave Met-Lys and Arg-Ser bonds in kininogen to release Lys-bradykinin. This chain is Kallikrein-1E2 (KLK1E2), found in Equus caballus (Horse).